Consider the following 379-residue polypeptide: Protein hairy (379 aa).

The disordered stretch occupies residues Ser-20–Arg-50. Residues Gln-29–Glu-47 are compositionally biased toward basic and acidic residues. The segment at Lys-36–Asn-55 is interaction with Topors. The bHLH domain occupies Asp-38–Leu-95. One can recognise an Orange domain in the interval Phe-114–Leu-143. 2 disordered regions span residues Gln-167–Ala-208 and Gln-298–Ser-345. 2 stretches are compositionally biased toward low complexity: residues Pro-182–Thr-207 and Ala-301–Ala-328. The short motif at Trp-376–Trp-379 is the WRPW motif element.

As to quaternary structure, transcription repression requires formation of a complex with a corepressor protein (Groucho).

The protein resides in the nucleus. In terms of biological role, pair-rule protein that regulates embryonic segmentation and adult bristle patterning. Transcriptional repressor of genes that require a bHLH protein for their transcription (e.g. ftz). The polypeptide is Protein hairy (Drosophila virilis (Fruit fly)).